Reading from the N-terminus, the 360-residue chain is Peptide chain release factor 1 (360 aa).

Residue Q235 is modified to N5-methylglutamine.

It belongs to the prokaryotic/mitochondrial release factor family. Methylated by PrmC. Methylation increases the termination efficiency of RF1.

It is found in the cytoplasm. In terms of biological role, peptide chain release factor 1 directs the termination of translation in response to the peptide chain termination codons UAG and UAA. The sequence is that of Peptide chain release factor 1 from Burkholderia pseudomallei (strain 1106a).